The following is a 344-amino-acid chain: UDP-3-O-acylglucosamine N-acyltransferase (344 aa).

Residue His-248 is the Proton acceptor of the active site.

Belongs to the transferase hexapeptide repeat family. LpxD subfamily. Homotrimer.

The enzyme catalyses a UDP-3-O-[(3R)-3-hydroxyacyl]-alpha-D-glucosamine + a (3R)-hydroxyacyl-[ACP] = a UDP-2-N,3-O-bis[(3R)-3-hydroxyacyl]-alpha-D-glucosamine + holo-[ACP] + H(+). It participates in bacterial outer membrane biogenesis; LPS lipid A biosynthesis. Its function is as follows. Catalyzes the N-acylation of UDP-3-O-acylglucosamine using 3-hydroxyacyl-ACP as the acyl donor. Is involved in the biosynthesis of lipid A, a phosphorylated glycolipid that anchors the lipopolysaccharide to the outer membrane of the cell. In Prochlorococcus marinus (strain MIT 9515), this protein is UDP-3-O-acylglucosamine N-acyltransferase.